Here is a 335-residue protein sequence, read N- to C-terminus: Methyltransferase pgmE (335 aa).

Belongs to the methyltransferase superfamily.

The protein operates within pigment biosynthesis. It functions in the pathway secondary metabolite biosynthesis. In terms of biological role, methyltransferase; part of the gene cluster that mediates the biosynthesis of pleosporalin A, ascomycone A, as well as a third cryptic naphthoquinone derived pigment, all responsible for the coloration of conidia. Essential for the production of pleosporalin A, but not the 2 other final products. The pathway begins with the biosynthesis of the cyclized heptaketide 3-acetonyl-1,6,8-trihydroxy-2-naphthaldehyde by the NR-PKS pgmA. The C-6 hydroxyl group is further methylated by the O-methyltransferase pgmB to yield fusarubinaldehyde which is in turn oxidized by the cytochrome P450 monooxygenase pgmC at C-9. The C-1 hydroxyl group is then methylated spontaneously. Although pgmE, pgmD and pgmH are essential for the production of pleosporalin A, it is not the case for the 2 other final products and it remains difficult to assign a specific function to each enzyme. PgmF and pgmG seem not to be involved in pigment biosynthesis although they were regulated by the cluster-specific transcription factor pgmR. This Aspergillus terreus protein is Methyltransferase pgmE.